Here is a 414-residue protein sequence, read N- to C-terminus: Probable elongation factor 1-gamma 1 (414 aa).

The GST N-terminal domain maps to 1-82 (MALVLHTYKG…YVSRLNGDNS (82 aa)). Residues 87–215 (SLIEYAQIEQ…VKQTEAVPPI (129 aa)) form the GST C-terminal domain. Residues 214–224 (PIASKKAAQPA) show a composition bias toward low complexity. A disordered region spans residues 214–260 (PIASKKAAQPAKPKEEPKKKEAPVAEAPKLAEEEEAPKPKAKNPLDL). A compositionally biased stretch (basic and acidic residues) spans 225–236 (KPKEEPKKKEAP). The 161-residue stretch at 254–414 (AKNPLDLLPP…EALLDAKCFK (161 aa)) folds into the EF-1-gamma C-terminal domain.

EF-1 is composed of four subunits: alpha, beta, delta, and gamma.

Probably plays a role in anchoring the complex to other cellular components. The chain is Probable elongation factor 1-gamma 1 from Arabidopsis thaliana (Mouse-ear cress).